The primary structure comprises 809 residues: Zinc finger CCCH domain-containing protein 24 (809 aa).

At methionine 1 the chain carries N-acetylmethionine. A disordered region spans residues 1 to 74; that stretch reads METSSIEINE…NLESSDTKIT (74 aa). The segment covering 30–46 has biased composition (polar residues); it reads ETSSIDELPSSDSNATD. Residues 51–65 show a composition bias toward basic and acidic residues; that stretch reads VGEKRKRADEDEKTN. The C3H1-type zinc finger occupies 79 to 107; it reads WWKTSLCSYFRREASCSHGNECKYAHGEA. S-adenosyl-L-methionine is bound by residues glutamine 536 and glutamate 586. The interval 652–693 is disordered; the sequence is EEMTNSEHVADQNLPPSNTQVEELQDNEQKDSSSLEPEKTTK. Residues 678–692 show a composition bias toward basic and acidic residues; it reads NEQKDSSSLEPEKTT. Residue aspartate 704 coordinates S-adenosyl-L-methionine. Cysteine 732 acts as the Nucleophile in catalysis.

The protein belongs to the class I-like SAM-binding methyltransferase superfamily. RNA M5U methyltransferase family.

The protein is Zinc finger CCCH domain-containing protein 24 of Arabidopsis thaliana (Mouse-ear cress).